The following is a 430-amino-acid chain: S-adenosylmethionine synthase (430 aa).

Histidine 14 lines the ATP pocket. Aspartate 16 serves as a coordination point for Mg(2+). Residue glutamate 42 coordinates K(+). The L-methionine site is built by glutamate 55 and glutamine 98. Residues 98-108 (QSADINRGVER) form a flexible loop region. Residues 164–166 (DAK), 254–255 (KF), aspartate 263, 269–270 (RK), alanine 286, and lysine 290 contribute to the ATP site. Aspartate 263 is a binding site for L-methionine. Residue lysine 294 coordinates L-methionine.

It belongs to the AdoMet synthase family. As to quaternary structure, homotetramer; dimer of dimers. Mg(2+) is required as a cofactor. K(+) serves as cofactor.

It localises to the cytoplasm. The catalysed reaction is L-methionine + ATP + H2O = S-adenosyl-L-methionine + phosphate + diphosphate. Its pathway is amino-acid biosynthesis; S-adenosyl-L-methionine biosynthesis; S-adenosyl-L-methionine from L-methionine: step 1/1. In terms of biological role, catalyzes the formation of S-adenosylmethionine (AdoMet) from methionine and ATP. The overall synthetic reaction is composed of two sequential steps, AdoMet formation and the subsequent tripolyphosphate hydrolysis which occurs prior to release of AdoMet from the enzyme. This Phocaeicola vulgatus (strain ATCC 8482 / DSM 1447 / JCM 5826 / CCUG 4940 / NBRC 14291 / NCTC 11154) (Bacteroides vulgatus) protein is S-adenosylmethionine synthase.